The sequence spans 431 residues: Glutamate--tRNA ligase 1 (431 aa).

The 'HIGH' region motif lies at 6–16; sequence PSPTGDMHIGN. Residues 235–239 carry the 'KMSKS' region motif; that stretch reads KMSKR. Lysine 238 lines the ATP pocket.

This sequence belongs to the class-I aminoacyl-tRNA synthetase family. Glutamate--tRNA ligase type 1 subfamily. As to quaternary structure, monomer.

The protein resides in the cytoplasm. It carries out the reaction tRNA(Glu) + L-glutamate + ATP = L-glutamyl-tRNA(Glu) + AMP + diphosphate. In terms of biological role, catalyzes the attachment of glutamate to tRNA(Glu) in a two-step reaction: glutamate is first activated by ATP to form Glu-AMP and then transferred to the acceptor end of tRNA(Glu). In Campylobacter concisus (strain 13826), this protein is Glutamate--tRNA ligase 1.